Here is a 418-residue protein sequence, read N- to C-terminus: Peptide chain release factor subunit 1 (418 aa).

The protein belongs to the eukaryotic release factor 1 family. As to quaternary structure, heterodimer of two subunits, one of which binds GTP.

It localises to the cytoplasm. Its function is as follows. Directs the termination of nascent peptide synthesis (translation) in response to the termination codons UAA, UAG and UGA. This chain is Peptide chain release factor subunit 1, found in Haloarcula marismortui (strain ATCC 43049 / DSM 3752 / JCM 8966 / VKM B-1809) (Halobacterium marismortui).